Here is a 408-residue protein sequence, read N- to C-terminus: DNA primase DnaG (408 aa).

One can recognise a Toprim domain in the interval 171–250; sequence DAIIIVEGRA…AYSPRGKSVE (80 aa). Mg(2+) contacts are provided by E177, D219, and D221. The segment at 276–323 is disordered; it reads AEENVERLPPSAAPAEVRAPAGAGRTSEGERPPRREWDSKPPSTLGEH. Residues 284–298 are compositionally biased toward low complexity; sequence PPSAAPAEVRAPAGA. Over residues 302–314 the composition is skewed to basic and acidic residues; the sequence is SEGERPPRREWDS.

The protein belongs to the archaeal DnaG primase family. Forms a ternary complex with MCM helicase and DNA. Mg(2+) serves as cofactor.

It catalyses the reaction ssDNA + n NTP = ssDNA/pppN(pN)n-1 hybrid + (n-1) diphosphate.. Functionally, RNA polymerase that catalyzes the synthesis of short RNA molecules used as primers for DNA polymerase during DNA replication. In Methanoculleus marisnigri (strain ATCC 35101 / DSM 1498 / JR1), this protein is DNA primase DnaG.